The primary structure comprises 298 residues: Glutamyl-Q tRNA(Asp) synthetase (298 aa).

Residues 9–13 (RFAPS) and Glu45 contribute to the L-glutamate site. A 'HIGH' region motif is present at residues 12-22 (PSPSGELHFGS). Zn(2+)-binding residues include Cys101, Cys103, Tyr115, and Cys119. L-glutamate-binding residues include Tyr172 and Arg190. Residues 228–232 (KLSKQ) carry the 'KMSKS' region motif. Lys231 lines the ATP pocket.

The protein belongs to the class-I aminoacyl-tRNA synthetase family. GluQ subfamily. It depends on Zn(2+) as a cofactor.

In terms of biological role, catalyzes the tRNA-independent activation of glutamate in presence of ATP and the subsequent transfer of glutamate onto a tRNA(Asp). Glutamate is transferred on the 2-amino-5-(4,5-dihydroxy-2-cyclopenten-1-yl) moiety of the queuosine in the wobble position of the QUC anticodon. The sequence is that of Glutamyl-Q tRNA(Asp) synthetase from Salmonella choleraesuis (strain SC-B67).